The primary structure comprises 61 residues: Probradykinin-2 (61 aa).

The N-terminal stretch at Met-1–Cys-22 is a signal peptide. Positions Glu-23–Pro-50 are excised as a propeptide. Positions Glu-24 to Thr-61 are disordered. Over residues Glu-30–Ser-42 the composition is skewed to acidic residues. Pro-52 bears the 4-hydroxyproline mark.

Belongs to the frog skin active peptide (FSAP) family. Bradykinin-related peptide subfamily. As to expression, expressed by the skin glands.

The protein resides in the secreted. Its function is as follows. May produce in vitro relaxation of rat arterial smooth muscle and constriction of intestinal smooth muscle. May target bradykinin receptors (BDKRB). The protein is Probradykinin-2 of Pithecopus azureus (Orange-legged monkey tree frog).